We begin with the raw amino-acid sequence, 254 residues long: MVSWIISRLVVLIFGTLYPAYSSYKAVKTKNVKEYVKWMMYWIVFAFFTTAETLTDIVLSWFPFYFELKIAFVIWLLSPYTKGSSVLYRKFVHPTLSNKEKEIDEYITQARDKSYETMMRVGKRGLNLAANAAVTAAAKGQGVLSEKLRSFSMQDLTLIRDEDALPLQGPDGRLRASPGSLLDTIEDLGDDPTLSVRSGTNQADPRTEISEDDTGDKAPKRVKPIKKVPKPEPPASKTLKTRPKKKTSAGGDSA.

A run of 2 helical transmembrane segments spans residues 1 to 21 (MVSW…YPAY) and 35 to 55 (YVKW…ETLT). S152 bears the Phosphoserine mark. The interval 164 to 254 (ALPLQGPDGR…KKTSAGGDSA (91 aa)) is disordered. Polar residues predominate over residues 195–204 (SVRSGTNQAD). The span at 205–219 (PRTEISEDDTGDKAP) shows a compositional bias: basic and acidic residues.

This sequence belongs to the DP1 family. Interacts with odorant receptor proteins.

It localises to the membrane. Functionally, required for endoplasmic reticulum (ER) network formation, shaping and remodeling. May enhance the cell surface expression of odorant receptors. The polypeptide is Receptor expression-enhancing protein 2 (REEP2) (Bos taurus (Bovine)).